Here is a 99-residue protein sequence, read N- to C-terminus: Photosystem II reaction center Psb28 protein (99 aa).

Belongs to the Psb28 family. In terms of assembly, part of the photosystem II complex.

The protein resides in the cell inner membrane. This chain is Photosystem II reaction center Psb28 protein, found in Gloeobacter violaceus (strain ATCC 29082 / PCC 7421).